The following is a 365-amino-acid chain: Outer membrane protein assembly factor BamC (365 aa).

A signal peptide spans 1–19 (MKHNRLAIAALAPVLILVG). Residue Cys20 is the site of N-palmitoyl cysteine attachment. Cys20 carries the S-diacylglycerol cysteine lipid modification.

It belongs to the BamC family. As to quaternary structure, part of the Bam complex.

It is found in the cell outer membrane. Part of the outer membrane protein assembly complex, which is involved in assembly and insertion of beta-barrel proteins into the outer membrane. This is Outer membrane protein assembly factor BamC from Ferrimonas balearica (strain DSM 9799 / CCM 4581 / KCTC 23876 / PAT).